We begin with the raw amino-acid sequence, 146 residues long: D-aminoacyl-tRNA deacylase (146 aa).

The Gly-cisPro motif, important for rejection of L-amino acids signature appears at 137–138; that stretch reads GP.

This sequence belongs to the DTD family. Homodimer.

It localises to the cytoplasm. It catalyses the reaction glycyl-tRNA(Ala) + H2O = tRNA(Ala) + glycine + H(+). It carries out the reaction a D-aminoacyl-tRNA + H2O = a tRNA + a D-alpha-amino acid + H(+). Its function is as follows. An aminoacyl-tRNA editing enzyme that deacylates mischarged D-aminoacyl-tRNAs. Also deacylates mischarged glycyl-tRNA(Ala), protecting cells against glycine mischarging by AlaRS. Acts via tRNA-based rather than protein-based catalysis; rejects L-amino acids rather than detecting D-amino acids in the active site. By recycling D-aminoacyl-tRNA to D-amino acids and free tRNA molecules, this enzyme counteracts the toxicity associated with the formation of D-aminoacyl-tRNA entities in vivo and helps enforce protein L-homochirality. In Hahella chejuensis (strain KCTC 2396), this protein is D-aminoacyl-tRNA deacylase.